Here is a 212-residue protein sequence, read N- to C-terminus: Peptide methionine sulfoxide reductase MsrA (212 aa).

Cys-52 is a catalytic residue.

This sequence belongs to the MsrA Met sulfoxide reductase family.

The enzyme catalyses L-methionyl-[protein] + [thioredoxin]-disulfide + H2O = L-methionyl-(S)-S-oxide-[protein] + [thioredoxin]-dithiol. It carries out the reaction [thioredoxin]-disulfide + L-methionine + H2O = L-methionine (S)-S-oxide + [thioredoxin]-dithiol. Its function is as follows. Has an important function as a repair enzyme for proteins that have been inactivated by oxidation. Catalyzes the reversible oxidation-reduction of methionine sulfoxide in proteins to methionine. In Salmonella newport (strain SL254), this protein is Peptide methionine sulfoxide reductase MsrA.